The chain runs to 164 residues: Protein SprT (164 aa).

Positions 13–156 (YQQAEAFFKR…LCRRCREPLV (144 aa)) constitute a SprT-like domain. His-69 lines the Zn(2+) pocket. Glu-70 is a catalytic residue. His-73 serves as a coordination point for Zn(2+).

Belongs to the SprT family. Zn(2+) is required as a cofactor.

The protein localises to the cytoplasm. The chain is Protein SprT from Pseudomonas syringae pv. syringae (strain B728a).